The following is a 417-amino-acid chain: MYPRSCDTFVALPPSTEGQRIIFGKNSDRPCDEVQEVVYFPAKEHEPGKVECTYIEIEQVEKTFAVVLSRPAWLWGAEMGANEHQVCIGNEAVWGRESADGDEALLGMDLVRLALERADTAEKAVDVITDLLEKYGQGGNCMEDECGFTYHNSFLISDRKEAWVLETAGKHWAAERVEAGYRNISNQYSITTKIDKEHPGMRTYAKEQGWWDGESEFSFTDVYSYSSTARIQAAGGRYCEGQKLLQKSNGHISAQTMMDILRDKESGINMEGMFMSTGSMVSVIPKADHLPGVHFFTATPDPERSVFKPFVFVSDVPPLKHTSSPCFGEEDPVKKKPRFQSKPNRKHPLFLKHEVAAAIIDSSGERGQKIEKEMRDLEKQKLEEMEKYLTEGVEDSSLLVHLFTDTVEEEFSVYSSA.

A propeptide spanning residues 1 to 5 is cleaved from the precursor; the sequence is MYPRS. C6 is a catalytic residue. Glyoxylic acid (Cys); alternate is present on C6. C6 carries the post-translational modification Pyruvic acid (Cys); alternate.

This sequence belongs to the peptidase C69 family. Secernin subfamily.

Its function is as follows. Plays a role in thermal nociception. The chain is Secernin-3 (scrn3) from Danio rerio (Zebrafish).